The primary structure comprises 247 residues: Homeobox-leucine zipper protein HOX15 (247 aa).

A disordered region spans residues 1–44 (MAQDDEDVGLALGLSLGSGGHRRQRESRDEAPSSAAASLLTLRL). The segment covering 32–44 (PSSAAASLLTLRL) has biased composition (low complexity). A DNA-binding region (homeobox) is located at residues 91–150 (NSRKKLRLSKEQSALLEDRFKEHSTLNPKQKVALAKQLNLRPRQVEVWFQNRRARTKLKQ). Positions 149-193 (KQTEVDCELLKRCCETLTEENRRLHRELQQLRALTHSTAAGFFMA) are leucine-zipper. The disordered stretch occupies residues 221 to 247 (SPTAAADRTNKPTAPHLFSPFAKSAAC).

It belongs to the HD-ZIP homeobox family. Class II subfamily. In terms of tissue distribution, expressed in seedlings, stems, leaf blades and panicles.

It localises to the nucleus. Probable transcription factor. The chain is Homeobox-leucine zipper protein HOX15 (HOX15) from Oryza sativa subsp. japonica (Rice).